The primary structure comprises 710 residues: Integrator complex subunit 10 (710 aa).

Positions 366 to 393 are disordered; sequence IHKKRKLAEGREKTMSSDDEDPSGKARS. The span at 372–381 shows a compositional bias: basic and acidic residues; sequence LAEGREKTMS.

Belongs to the Integrator subunit 10 family. In terms of assembly, component of the Integrator complex, composed of core subunits INTS1, INTS2, INTS3, INTS4, INTS5, INTS6, INTS7, INTS8, INTS9/RC74, INTS10, INTS11/CPSF3L, INTS12, INTS13, INTS14 and INTS15. The core complex associates with protein phosphatase 2A subunits PPP2CA and PPP2R1A, to form the Integrator-PP2A (INTAC) complex. INTS10 is part of the tail subcomplex, composed of INTS10, INTS13, INTS14 and INTS15.

The protein localises to the nucleus. Component of the integrator complex, a multiprotein complex that terminates RNA polymerase II (Pol II) transcription in the promoter-proximal region of genes. The integrator complex provides a quality checkpoint during transcription elongation by driving premature transcription termination of transcripts that are unfavorably configured for transcriptional elongation: the complex terminates transcription by (1) catalyzing dephosphorylation of the C-terminal domain (CTD) of Pol II subunit POLR2A/RPB1 and SUPT5H/SPT5, (2) degrading the exiting nascent RNA transcript via endonuclease activity and (3) promoting the release of Pol II from bound DNA. The integrator complex is also involved in terminating the synthesis of non-coding Pol II transcripts, such as enhancer RNAs (eRNAs), small nuclear RNAs (snRNAs), telomerase RNAs and long non-coding RNAs (lncRNAs). The sequence is that of Integrator complex subunit 10 (INTS10) from Gallus gallus (Chicken).